The sequence spans 247 residues: tRNA pseudouridine synthase A (247 aa).

The active-site Nucleophile is D53. Y111 provides a ligand contact to substrate.

This sequence belongs to the tRNA pseudouridine synthase TruA family. Homodimer.

It carries out the reaction uridine(38/39/40) in tRNA = pseudouridine(38/39/40) in tRNA. Functionally, formation of pseudouridine at positions 38, 39 and 40 in the anticodon stem and loop of transfer RNAs. The sequence is that of tRNA pseudouridine synthase A from Bacillus subtilis (strain 168).